The primary structure comprises 409 residues: UPF0261 protein Spro_4740 (409 aa).

It belongs to the UPF0261 family.

In Serratia proteamaculans (strain 568), this protein is UPF0261 protein Spro_4740.